The following is a 596-amino-acid chain: V-type ATP synthase alpha chain (596 aa).

233–240 provides a ligand contact to ATP; sequence GPFGAGKT.

It belongs to the ATPase alpha/beta chains family.

The enzyme catalyses ATP + H2O + 4 H(+)(in) = ADP + phosphate + 5 H(+)(out). Functionally, produces ATP from ADP in the presence of a proton gradient across the membrane. The V-type alpha chain is a catalytic subunit. This is V-type ATP synthase alpha chain from Streptococcus sanguinis (strain SK36).